Reading from the N-terminus, the 253-residue chain is Tryptophan synthase alpha chain (253 aa).

Catalysis depends on proton acceptor residues E47 and D58.

Belongs to the TrpA family. In terms of assembly, tetramer of two alpha and two beta chains.

The enzyme catalyses (1S,2R)-1-C-(indol-3-yl)glycerol 3-phosphate + L-serine = D-glyceraldehyde 3-phosphate + L-tryptophan + H2O. It participates in amino-acid biosynthesis; L-tryptophan biosynthesis; L-tryptophan from chorismate: step 5/5. The alpha subunit is responsible for the aldol cleavage of indoleglycerol phosphate to indole and glyceraldehyde 3-phosphate. This chain is Tryptophan synthase alpha chain, found in Lactococcus lactis subsp. cremoris (strain MG1363).